Reading from the N-terminus, the 417-residue chain is D-amino acid dehydrogenase (417 aa).

3–17 (AVVLGSGVVGLMSAW) provides a ligand contact to FAD.

The protein belongs to the DadA oxidoreductase family. The cofactor is FAD.

It carries out the reaction a D-alpha-amino acid + A + H2O = a 2-oxocarboxylate + AH2 + NH4(+). In terms of biological role, oxidative deamination of D-amino acids. This chain is D-amino acid dehydrogenase, found in Vibrio vulnificus (strain YJ016).